The following is a 1161-amino-acid chain: Nardilysin (1161 aa).

The first 18 residues, 1-18, serve as a signal peptide directing secretion; the sequence is MLRRVAVAAVFATGRKLR. Disordered stretches follow at residues 42 to 105 and 130 to 218; these read KPFP…KSPS and VEGK…KKTT. S85, S91, and S93 each carry phosphoserine. The span at 138 to 209 shows a compositional bias: acidic residues; sequence TDEEEEEEEE…EENELEELEE (72 aa). A Zn(2+)-binding site is contributed by H244. E247 (proton acceptor) is an active-site residue. The Zn(2+) site is built by H248 and E325.

Belongs to the peptidase M16 family. As to quaternary structure, interacts with BACE1 and NRG1. The cofactor is Zn(2+). As to expression, testis, and in a lower level in brain, heart and adrenal glands.

Its subcellular location is the mitochondrion. It is found in the cell projection. The protein localises to the dendrite. The catalysed reaction is Hydrolysis of polypeptides, preferably at -Xaa-|-Arg-Lys-, and less commonly at -Arg-|-Arg-Xaa-, in which Xaa is not Arg or Lys.. Its function is as follows. Cleaves peptide substrates on the N-terminus of arginine residues in dibasic pairs. Is a critical activator of BACE1- and ADAM17-mediated pro-neuregulin ectodomain shedding, involved in the positive regulation of axonal maturation and myelination. Required for proper functioning of 2-oxoglutarate dehydrogenase (OGDH). The polypeptide is Nardilysin (Rattus norvegicus (Rat)).